Consider the following 439-residue polypeptide: Hemagglutinin-esterase (439 aa).

Positions 1 to 22 (MGSMCIAMAPRTLLLLIGCQLA) are cleaved as a signal peptide. An esterase domain 1 region spans residues 12–132 (TLLLLIGCQL…DNKRWMGNKA (121 aa)). At 23–407 (LGFNEPLNVV…PVCLYDPLPV (385 aa)) the chain is on the virion surface side. The Nucleophile role is filled by serine 45. The cysteines at positions 49 and 70 are disulfide-linked. 5 N-linked (GlcNAc...) asparagine; by host glycosylation sites follow: asparagine 94, asparagine 152, asparagine 196, asparagine 246, and asparagine 316. A disulfide bond links cysteine 118 and cysteine 167. A receptor binding region spans residues 133–281 (RFYALVYKKM…GNYKAVSLEY (149 aa)). Cystine bridges form between cysteine 202–cysteine 291 and cysteine 210–cysteine 264. Residues 282–395 (LLTIPSKAIC…QCPTAANIEF (114 aa)) form an esterase domain 2 region. A disulfide bond links cysteine 322 and cysteine 327. N-linked (GlcNAc...) asparagine; by host glycosylation is found at asparagine 331 and asparagine 337. Catalysis depends on charge relay system residues aspartate 342 and histidine 345. N-linked (GlcNAc...) asparagine; by host glycosylation is found at asparagine 360 and asparagine 374. A disulfide bridge links cysteine 363 with cysteine 387. A helical transmembrane segment spans residues 408–428 (ILLGVLLGIAVLIIVFLLFYF). Topologically, residues 429-439 (MTDSGVRLHEA) are intravirion.

This sequence belongs to the influenza type C/coronaviruses hemagglutinin-esterase family. As to quaternary structure, homodimer; disulfide-linked. Forms a complex with the M protein in the pre-Golgi. Associates then with S-M complex to form a ternary complex S-M-HE. Post-translationally, N-glycosylated in the host RER.

The protein resides in the virion membrane. It is found in the host cell membrane. It catalyses the reaction N-acetyl-9-O-acetylneuraminate + H2O = N-acetylneuraminate + acetate + H(+). It carries out the reaction N-acetyl-4-O-acetylneuraminate + H2O = N-acetylneuraminate + acetate + H(+). In terms of biological role, structural protein that makes short spikes at the surface of the virus. Contains receptor binding and receptor-destroying activities. Mediates de-O-acetylation of N-acetyl-4-O-acetylneuraminic acid, which is probably the receptor determinant recognized by the virus on the surface of erythrocytes and susceptible cells. This receptor-destroying activity is important for virus release as it probably helps preventing self-aggregation and ensures the efficient spread of the progeny virus from cell to cell. May serve as a secondary viral attachment protein for initiating infection, the spike protein being the major one. May become a target for both the humoral and the cellular branches of the immune system. The sequence is that of Hemagglutinin-esterase from Puffinosis coronavirus (PV).